The sequence spans 333 residues: Putative pectinesterase 14 (333 aa).

The N-terminal stretch at 1-16 (MLFFILFLSIISPIES) is a signal peptide. N-linked (GlcNAc...) asparagine glycans are attached at residues Asn-108 and Asn-114. Thr-116 provides a ligand contact to substrate. N-linked (GlcNAc...) asparagine glycosylation is present at Asn-133. Gln-151 contacts substrate. Catalysis depends on Asp-174, which acts as the Proton donor. Asp-195 (nucleophile) is an active-site residue. Arg-253 is a substrate binding site. N-linked (GlcNAc...) asparagine glycans are attached at residues Asn-302 and Asn-323.

The protein belongs to the pectinesterase family. Expressed in flower buds.

Its subcellular location is the secreted. The protein resides in the cell wall. The enzyme catalyses [(1-&gt;4)-alpha-D-galacturonosyl methyl ester](n) + n H2O = [(1-&gt;4)-alpha-D-galacturonosyl](n) + n methanol + n H(+). The protein operates within glycan metabolism; pectin degradation; 2-dehydro-3-deoxy-D-gluconate from pectin: step 1/5. Acts in the modification of cell walls via demethylesterification of cell wall pectin. The polypeptide is Putative pectinesterase 14 (PME14) (Arabidopsis thaliana (Mouse-ear cress)).